The primary structure comprises 251 residues: Meso-2,3-butanediol dehydrogenase (251 aa).

Asn15, Met17, Asp36, Asp60, Val61, and Asn87 together coordinate NAD(+). 3 residues coordinate (R)-acetoin: Ser138, Ser140, and Tyr151. A (S)-acetoin-binding site is contributed by Ser138. NAD(+)-binding residues include Tyr151, Lys155, Val184, and Thr186. Tyr151 contacts (S)-acetoin. The active-site Proton acceptor is Tyr151.

This sequence belongs to the short-chain dehydrogenases/reductases (SDR) family. As to quaternary structure, homotetramer; dimer of dimers.

It catalyses the reaction (R,S)-butane-2,3-diol + NAD(+) = (R)-acetoin + NADH + H(+). The enzyme catalyses (S,S)-butane-2,3-diol + NAD(+) = (S)-acetoin + NADH + H(+). The catalysed reaction is (S)-acetoin + NAD(+) = diacetyl + NADH + H(+). Its activity is regulated as follows. Oxidation of meso-2,3-butanediol is enhanced in the presence of Fe(2+). Reduction of diacetyl and (3S/3R)-acetoin is slightly enhanced in the presence of Mg(2+) and Mn(2+). Activity is inhibited by several metal ions, particularly Fe(3+) for reduction of diacetyl and acetoin. Functionally, catalyzes the NAD-dependent oxidation of meso-2,3-butanediol to (3R)-acetoin, and of (2S,3S)-2,3-butanediol to (3S)-acetoin, with much lower efficiency. Can also oxidize several primary alcohols such as glycerol, 1-2-pentanediol and 1,2-propanediol, with lower activity. Cannot use (2R,3R)-2,3-butanediol. In the presence of NADH, catalyzes the reduction of (3R)-acetoin to meso-2,3-butanediol, of (3S)-acetoin to (2S,3S)-2,3-butanediol and of diacetyl to (3S)-acetoin. No activity is detected with NADPH/NADP(+). The chain is Meso-2,3-butanediol dehydrogenase from Serratia marcescens.